The chain runs to 365 residues: Putative tRNA 2'-phosphotransferase (365 aa).

Disordered regions lie at residues 1–35 and 231–254; these read MYKNMNSHELIEESNNSGTPATKSSSKPTKKIRPR and LLDAKASPKNNRSDESDQSDPESI. Over residues 17–27 the composition is skewed to low complexity; sequence SGTPATKSSSK.

Belongs to the KptA/TPT1 family.

It carries out the reaction 2'-phospho-[ligated tRNA] + NAD(+) = mature tRNA + ADP-alpha-D-ribose 1'',2''-cyclic phosphate + nicotinamide. Catalyzes the last step of tRNA splicing, the transfer of the splice junction 2'-phosphate from ligated tRNA to NAD to produce ADP-ribose 1''-2'' cyclic phosphate. The protein is Putative tRNA 2'-phosphotransferase of Schizosaccharomyces pombe (strain 972 / ATCC 24843) (Fission yeast).